The chain runs to 663 residues: Translation factor GUF1 homolog, mitochondrial (663 aa).

The tr-type G domain maps to 64–250 (EKIRNFSIIA…AVIERIPPPP (187 aa)). GTP is bound by residues 73–80 (AHIDHGKS), 143–147 (DTPGH), and 197–200 (NKID).

The protein belongs to the TRAFAC class translation factor GTPase superfamily. Classic translation factor GTPase family. LepA subfamily.

The protein resides in the mitochondrion inner membrane. It catalyses the reaction GTP + H2O = GDP + phosphate + H(+). Its function is as follows. Promotes mitochondrial protein synthesis. May act as a fidelity factor of the translation reaction, by catalyzing a one-codon backward translocation of tRNAs on improperly translocated ribosomes. Binds to mitochondrial ribosomes in a GTP-dependent manner. This chain is Translation factor GUF1 homolog, mitochondrial, found in Arabidopsis thaliana (Mouse-ear cress).